Here is a 423-residue protein sequence, read N- to C-terminus: Glutamate--cysteine ligase EgtA (423 aa).

It belongs to the glutamate--cysteine ligase type 2 family. EgtA subfamily.

It carries out the reaction L-cysteine + L-glutamate + ATP = gamma-L-glutamyl-L-cysteine + ADP + phosphate + H(+). Its pathway is amino-acid biosynthesis; ergothioneine biosynthesis. Its function is as follows. Catalyzes the synthesis of gamma-glutamylcysteine (gamma-GC). This compound is used as substrate for the biosynthesis of the low-molecular thiol compound ergothioneine. The sequence is that of Glutamate--cysteine ligase EgtA from Mycolicibacterium smegmatis (strain ATCC 700084 / mc(2)155) (Mycobacterium smegmatis).